A 377-amino-acid polypeptide reads, in one-letter code: Nitric oxide reductase FlRd-NAD(+) reductase (377 aa).

This sequence belongs to the FAD-dependent oxidoreductase family. FAD serves as cofactor.

It is found in the cytoplasm. It catalyses the reaction 2 reduced [nitric oxide reductase rubredoxin domain] + NAD(+) + H(+) = 2 oxidized [nitric oxide reductase rubredoxin domain] + NADH. Its pathway is nitrogen metabolism; nitric oxide reduction. Functionally, one of at least two accessory proteins for anaerobic nitric oxide (NO) reductase. Reduces the rubredoxin moiety of NO reductase. The polypeptide is Nitric oxide reductase FlRd-NAD(+) reductase (Escherichia fergusonii (strain ATCC 35469 / DSM 13698 / CCUG 18766 / IAM 14443 / JCM 21226 / LMG 7866 / NBRC 102419 / NCTC 12128 / CDC 0568-73)).